The following is a 166-amino-acid chain: D-aminoacyl-tRNA deacylase (166 aa).

The short motif at 142–143 (GP) is the Gly-cisPro motif, important for rejection of L-amino acids element.

Belongs to the DTD family. Homodimer.

It is found in the cytoplasm. The enzyme catalyses glycyl-tRNA(Ala) + H2O = tRNA(Ala) + glycine + H(+). It catalyses the reaction a D-aminoacyl-tRNA + H2O = a tRNA + a D-alpha-amino acid + H(+). Its function is as follows. An aminoacyl-tRNA editing enzyme that deacylates mischarged D-aminoacyl-tRNAs. Also deacylates mischarged glycyl-tRNA(Ala), protecting cells against glycine mischarging by AlaRS. Acts via tRNA-based rather than protein-based catalysis; rejects L-amino acids rather than detecting D-amino acids in the active site. By recycling D-aminoacyl-tRNA to D-amino acids and free tRNA molecules, this enzyme counteracts the toxicity associated with the formation of D-aminoacyl-tRNA entities in vivo and helps enforce protein L-homochirality. This chain is D-aminoacyl-tRNA deacylase, found in Ralstonia nicotianae (strain ATCC BAA-1114 / GMI1000) (Ralstonia solanacearum).